Here is a 153-residue protein sequence, read N- to C-terminus: NAD(P)H-quinone oxidoreductase subunit N (153 aa).

It belongs to the complex I NdhN subunit family. NDH-1 can be composed of about 15 different subunits; different subcomplexes with different compositions have been identified which probably have different functions.

The protein resides in the cellular thylakoid membrane. The enzyme catalyses a plastoquinone + NADH + (n+1) H(+)(in) = a plastoquinol + NAD(+) + n H(+)(out). The catalysed reaction is a plastoquinone + NADPH + (n+1) H(+)(in) = a plastoquinol + NADP(+) + n H(+)(out). NDH-1 shuttles electrons from an unknown electron donor, via FMN and iron-sulfur (Fe-S) centers, to quinones in the respiratory and/or the photosynthetic chain. The immediate electron acceptor for the enzyme in this species is believed to be plastoquinone. Couples the redox reaction to proton translocation, and thus conserves the redox energy in a proton gradient. Cyanobacterial NDH-1 also plays a role in inorganic carbon-concentration. This chain is NAD(P)H-quinone oxidoreductase subunit N, found in Synechococcus sp. (strain WH7803).